Here is an 886-residue protein sequence, read N- to C-terminus: Protein suppressor of hairy wing (886 aa).

Disordered regions lie at residues 24–62 and 167–211; these read SVSP…GIKG and DEVV…KNSG. The segment covering 184–201 has biased composition (acidic residues); sequence VTEEEEEEEEDDLDEEGD. A C2H2-type 1; atypical zinc finger spans residues 221 to 243; sequence HVCGKCYKTFRRLMSLKKHLEFC. A C2H2-type 2 zinc finger spans residues 291–314; sequence INCPDCPKSFKTQTSYERHIFITH. The C2H2-type 3; atypical zinc-finger motif lies at 320-342; that stretch reads YPCSICNANLRSEALLKLHEEQH. 9 C2H2-type zinc fingers span residues 349–367, 381–403, 414–436, 442–464, 470–492, 498–520, 524–546, 554–578, and 600–623; these read YACK…LKRH, MSCK…LKHH, YMCH…IRTH, FDCD…RRYH, YSCT…MKRH, HKCE…SKTH, FACD…VKEH, FSCT…AGDH, and TDCA…RSVH. Positions 571–587 are enriched in basic and acidic residues; that stretch reads QHMDAGDHSEKSGEKPQ. Residues 571 to 594 are disordered; it reads QHMDAGDHSEKSGEKPQRAKRSST.

Its subcellular location is the nucleus. In terms of biological role, component of the gypsy chromatin insulator complex which is required for the function of the gypsy chromatin insulator and other endogenous chromatin insulators. Chromatin insulators are regulatory elements which establish independent domains of transcriptional activity within eukaryotic genomes. Insulators have two defining properties; they can block the communication between an enhancer and a promoter when placed between them and can also buffer transgenes from position effect variegation (PEV). Insulators are proposed to structure the chromatin fiber into independent domains of differing transcriptional potential by promoting the formation of distinct chromatin loops. This chromatin looping may involve the formation of insulator bodies, where homotypic interactions between individual subunits of the insulator complex could promote the clustering of widely spaced insulators at the nuclear periphery. Within the gypsy insulator complex, this protein binds specifically to a region of the gypsy element located 3' of the 5' long terminal repeat (LTR), and may also mediate interaction with other endogenous insulators at sites distinct from those recognized by Cp190. Cooperates with pita and cliff to recruit Cp190 and regulate insulator function at the front-ultraabdominal (Fub) boundary. The protein is Protein suppressor of hairy wing (su(Hw)) of Drosophila ananassae (Fruit fly).